The primary structure comprises 200 residues: HTH-type transcriptional repressor KstR2 (200 aa).

The HTH tetR-type domain occupies 9–69 (NSRRGELLEL…ELLRGFLDWL (61 aa)). The H-T-H motif DNA-binding region spans 32-51 (TVRDIADGAGILSGSLYHHF).

As to quaternary structure, homodimer.

Controls the expression of a small regulon that may play a role in the utilization of cholesterol. The chain is HTH-type transcriptional repressor KstR2 (kstR2) from Mycobacterium tuberculosis (strain CDC 1551 / Oshkosh).